Consider the following 466-residue polypeptide: Argininosuccinate lyase (466 aa).

The protein belongs to the lyase 1 family. Argininosuccinate lyase subfamily.

Its subcellular location is the cytoplasm. The catalysed reaction is 2-(N(omega)-L-arginino)succinate = fumarate + L-arginine. It functions in the pathway amino-acid biosynthesis; L-arginine biosynthesis; L-arginine from L-ornithine and carbamoyl phosphate: step 3/3. The protein is Argininosuccinate lyase of Desulfovibrio desulfuricans (strain ATCC 27774 / DSM 6949 / MB).